A 1136-amino-acid chain; its full sequence is Alpha-1,4-glucan:maltose-1-phosphate maltosyltransferase (1136 aa).

Positions 1–439 (METRPSFAPN…TLLRAQRARP (439 aa)) are unknown. Residues 440–1136 (VTTAPAEDRR…DVPAQEVHER (697 aa)) form a maltosyltransferase region. 3 residues coordinate alpha-maltose 1-phosphate: Lys710, Gln770, and Asp805. Catalysis depends on Asp842, which acts as the Nucleophile. Asn843 is an alpha-maltose 1-phosphate binding site. The active-site Proton donor is Glu871. 982-983 (KY) is a binding site for alpha-maltose 1-phosphate.

This sequence in the C-terminal section; belongs to the glycosyl hydrolase 13 family. GlgE subfamily. As to quaternary structure, homodimer.

The catalysed reaction is alpha-maltose 1-phosphate + [(1-&gt;4)-alpha-D-glucosyl](n) = [(1-&gt;4)-alpha-D-glucosyl](n+2) + phosphate. In terms of biological role, maltosyltransferase that uses maltose 1-phosphate (M1P) as the sugar donor to elongate linear or branched alpha-(1-&gt;4)-glucans. Is involved in a branched alpha-glucan biosynthetic pathway from trehalose, together with TreS, Mak and GlgB. This Burkholderia pseudomallei (strain K96243) protein is Alpha-1,4-glucan:maltose-1-phosphate maltosyltransferase (glgE).